We begin with the raw amino-acid sequence, 264 residues long: Thymidylate synthase (264 aa).

Arginine 21 provides a ligand contact to dUMP. A (6R)-5,10-methylene-5,6,7,8-tetrahydrofolate-binding site is contributed by histidine 51. Residue 126–127 (RR) participates in dUMP binding. The Nucleophile role is filled by cysteine 146. Residues 166–169 (RSVD), asparagine 177, and 207–209 (HLY) each bind dUMP. (6R)-5,10-methylene-5,6,7,8-tetrahydrofolate is bound at residue aspartate 169. Serine 263 contacts (6R)-5,10-methylene-5,6,7,8-tetrahydrofolate.

Belongs to the thymidylate synthase family. Bacterial-type ThyA subfamily. In terms of assembly, homodimer.

The protein localises to the cytoplasm. It catalyses the reaction dUMP + (6R)-5,10-methylene-5,6,7,8-tetrahydrofolate = 7,8-dihydrofolate + dTMP. The protein operates within pyrimidine metabolism; dTTP biosynthesis. Its function is as follows. Catalyzes the reductive methylation of 2'-deoxyuridine-5'-monophosphate (dUMP) to 2'-deoxythymidine-5'-monophosphate (dTMP) while utilizing 5,10-methylenetetrahydrofolate (mTHF) as the methyl donor and reductant in the reaction, yielding dihydrofolate (DHF) as a by-product. This enzymatic reaction provides an intracellular de novo source of dTMP, an essential precursor for DNA biosynthesis. This is Thymidylate synthase from Anoxybacillus flavithermus (strain DSM 21510 / WK1).